The sequence spans 138 residues: Small ribosomal subunit protein uS11c (138 aa).

It belongs to the universal ribosomal protein uS11 family. In terms of assembly, part of the 30S ribosomal subunit.

Its subcellular location is the plastid. The protein localises to the chloroplast. The protein is Small ribosomal subunit protein uS11c of Acorus calamus (Sweet flag).